We begin with the raw amino-acid sequence, 227 residues long: MTSITIALSKGRIFDDTAPLLKAAGIIPLDDPETSRKLILATNRDDVRLIIVRASDVPTYVQYGAADMGIAGKDVLLEHGGAGLYQPLDLNIARCRMMVAVRSDFDYESAVRRGARVRVATKYLQTAREHFAEKGMHVDLIKLYGSMELAPLVGLADAIVDLVSSGNTLKANNLKAVEEIMPISSRLIINQAALKLKRRAIQPMLEAFSAAITPLTPLSPYPLGATP.

This sequence belongs to the ATP phosphoribosyltransferase family. Short subfamily. Heteromultimer composed of HisG and HisZ subunits.

Its subcellular location is the cytoplasm. It carries out the reaction 1-(5-phospho-beta-D-ribosyl)-ATP + diphosphate = 5-phospho-alpha-D-ribose 1-diphosphate + ATP. Its pathway is amino-acid biosynthesis; L-histidine biosynthesis; L-histidine from 5-phospho-alpha-D-ribose 1-diphosphate: step 1/9. Functionally, catalyzes the condensation of ATP and 5-phosphoribose 1-diphosphate to form N'-(5'-phosphoribosyl)-ATP (PR-ATP). Has a crucial role in the pathway because the rate of histidine biosynthesis seems to be controlled primarily by regulation of HisG enzymatic activity. The protein is ATP phosphoribosyltransferase of Nitrosospira multiformis (strain ATCC 25196 / NCIMB 11849 / C 71).